A 382-amino-acid chain; its full sequence is MAKEGEERKKEKKEKKERKERKRREAEELAVREKKISKKHKSKSKEEEKPEKSKKKSKKYEEVEEEEKSPSPSPSPKKSKESKKKHKRSSDESEEIVDSKPVTVPIVTIESDSDFEFDKEDIKNLLESYSKEELINLIYKTAEKGSKLISAVFESADRDSSQRNIFVRGLGWDTTHENLKAAFEVYGEITECSVVMDKDTGRAKGFGFVLFKTRKGARAALKNPEKRMYNRTVSCLPARPFNSGKPREQQQPVESVKIDLSHTGNQSEMALPGIDLGHGLDKGHQQQQNMSMYAGQNMPFYGHSQPPPGFNPMYGAMMGNPMVAGLQNYRMFGSGMMNQGPMMPPNHMGMVGQYVGDGNVNGVGAGAGAGAGFDGERAWYLR.

Residues 1 to 99 form a disordered region; the sequence is MAKEGEERKK…SDESEEIVDS (99 aa). The span at 10–22 shows a compositional bias: basic residues; sequence KEKKEKKERKERK. The span at 23 to 34 shows a compositional bias: basic and acidic residues; that stretch reads RREAEELAVREK. In terms of domain architecture, RRM spans 163–248; sequence RNIFVRGLGW…RPFNSGKPRE (86 aa).

Its subcellular location is the nucleus. Functionally, acts as a component of a complex regulating the turnover of mRNAs in the nucleus. Binds with high affinity to RNA molecules that contain U-rich sequences in 3'-UTRs. May function in complex with UBP1 and contribute to the stabilization of mRNAs in the nucleus. In Arabidopsis thaliana (Mouse-ear cress), this protein is UBP1-associated proteins 1B (UBA1B).